The sequence spans 258 residues: Snake venom serine protease (258 aa).

The signal sequence occupies residues 1-18 (MVLIRVLANLLILQLSYA). Positions 19 to 24 (QKSSEL) are excised as a propeptide. A Peptidase S1 domain is found at 25–249 (VIGGDECNIN…YTEWIQSILA (225 aa)). Intrachain disulfides connect cysteine 31/cysteine 163, cysteine 50/cysteine 66, cysteine 98/cysteine 256, cysteine 142/cysteine 210, cysteine 174/cysteine 189, and cysteine 200/cysteine 225. Active-site charge relay system residues include histidine 65 and aspartate 110. An N-linked (GlcNAc...) asparagine glycan is attached at asparagine 154. The active-site Charge relay system is serine 204.

It belongs to the peptidase S1 family. Snake venom subfamily. As to quaternary structure, monomer. In terms of tissue distribution, expressed by the venom gland.

Its subcellular location is the secreted. Its function is as follows. Snake venom serine protease that may act in the hemostasis system of the prey. The polypeptide is Snake venom serine protease (Lachesis stenophrys (Central American bushmaster)).